Consider the following 476-residue polypeptide: Methylenetetrahydrofolate--tRNA-(uracil-5-)-methyltransferase TrmFO (476 aa).

Residue 13-18 coordinates FAD; that stretch reads GGGLAG. The tract at residues 425–446 is disordered; sequence PPLESPPTHGADGKKLRGPDKT. Residues 435-446 are compositionally biased toward basic and acidic residues; sequence ADGKKLRGPDKT.

It belongs to the MnmG family. TrmFO subfamily. FAD serves as cofactor.

The protein localises to the cytoplasm. The catalysed reaction is uridine(54) in tRNA + (6R)-5,10-methylene-5,6,7,8-tetrahydrofolate + NADH + H(+) = 5-methyluridine(54) in tRNA + (6S)-5,6,7,8-tetrahydrofolate + NAD(+). It carries out the reaction uridine(54) in tRNA + (6R)-5,10-methylene-5,6,7,8-tetrahydrofolate + NADPH + H(+) = 5-methyluridine(54) in tRNA + (6S)-5,6,7,8-tetrahydrofolate + NADP(+). Functionally, catalyzes the folate-dependent formation of 5-methyl-uridine at position 54 (M-5-U54) in all tRNAs. The protein is Methylenetetrahydrofolate--tRNA-(uracil-5-)-methyltransferase TrmFO of Rhodopseudomonas palustris (strain BisB18).